A 255-amino-acid chain; its full sequence is MGKLPRPVPWLAAGENFPPLEFAWGRHDPAPGLLAAGAALDVPTLIQAYSRGIFPWFSLGQPVLWWSPDPRMVLHTEKFKLHRSLRKSLIHFLDDPECEIKFDSAFEHVIKACASQPRAGQPGTWIVPDMVQAYSSLHRAGYAHSVETWVRGKLVGGLYCVKLGRMVFGESMFAHQTDASKIALAALVGFCRAHQIAMIDCQQNTRHLASLGAAEIDRADFVRHLAQNVEKTTPPWQFEPVYWKQILTAEKPTLP.

Belongs to the L/F-transferase family.

The protein localises to the cytoplasm. It catalyses the reaction N-terminal L-lysyl-[protein] + L-leucyl-tRNA(Leu) = N-terminal L-leucyl-L-lysyl-[protein] + tRNA(Leu) + H(+). The enzyme catalyses N-terminal L-arginyl-[protein] + L-leucyl-tRNA(Leu) = N-terminal L-leucyl-L-arginyl-[protein] + tRNA(Leu) + H(+). It carries out the reaction L-phenylalanyl-tRNA(Phe) + an N-terminal L-alpha-aminoacyl-[protein] = an N-terminal L-phenylalanyl-L-alpha-aminoacyl-[protein] + tRNA(Phe). Functionally, functions in the N-end rule pathway of protein degradation where it conjugates Leu, Phe and, less efficiently, Met from aminoacyl-tRNAs to the N-termini of proteins containing an N-terminal arginine or lysine. In Polaromonas sp. (strain JS666 / ATCC BAA-500), this protein is Leucyl/phenylalanyl-tRNA--protein transferase.